The following is a 126-amino-acid chain: Methylglyoxal synthase (126 aa).

Residues 1–126 (MAERQKIALI…ADRLLPVITE (126 aa)) form the MGS-like domain. Substrate is bound by residues histidine 12, lysine 16, 38–41 (TGTT), and 59–60 (SG). The active-site Proton donor/acceptor is aspartate 65. Residue histidine 92 coordinates substrate.

It belongs to the methylglyoxal synthase family.

It catalyses the reaction dihydroxyacetone phosphate = methylglyoxal + phosphate. In terms of biological role, catalyzes the formation of methylglyoxal from dihydroxyacetone phosphate. This chain is Methylglyoxal synthase, found in Allorhizobium ampelinum (strain ATCC BAA-846 / DSM 112012 / S4) (Agrobacterium vitis (strain S4)).